A 608-amino-acid chain; its full sequence is Zinc finger protein 652 (608 aa).

Residue Ser57 is modified to Phosphoserine. The disordered stretch occupies residues 61 to 232 (VLADTKMSKP…KRATKEAKAP (172 aa)). Over residues 71–97 (HLHETEEQPYFREPRAVSDVHTVKEDR) the composition is skewed to basic and acidic residues. Composition is skewed to acidic residues over residues 98-108 (ENSDDTEEEEE) and 151-162 (EEDEEETEEEAT). Position 100 is a phosphoserine (Ser100). Residue Thr103 is modified to Phosphothreonine. Residues 194 to 208 (AASAAAATTSPAPRT) show a composition bias toward low complexity. Ser196 and Ser203 each carry phosphoserine. The C2H2-type 1 zinc-finger motif lies at 244–267 (LTCEKCPRVFNTRWYLEKHMNVTH). The segment at 271 to 293 (QICDKCGKKFVLESELSLHQQTD) adopts a C2H2-type 2; degenerate zinc-finger fold. 6 C2H2-type zinc fingers span residues 298-321 (IQCVSCNKSFKKLWSLHEHIKIVH), 328-350 (FACEICEKKFYTMAHVRKHMVAH), 356-378 (FTCETCGKSFKRSMSLKVHSLQH), 384-406 (FRCENCDERFQYKYQLRSHMSIH), 412-434 (FMCQWCGKDFNMKQYFDEHMKTH), and 440-462 (FICEICGKSFTSRPNMKRHRRTH). The C2H2-type 9; degenerate zinc-finger motif lies at 468–491 (YPCDVCGQRFRFSNMLKAHKEKCF). Residues 497–608 (VNVPPAVQIP…KNSAAPAQHH (112 aa)) form a mediates interaction with CBFA2T3 region.

The protein belongs to the krueppel C2H2-type zinc-finger protein family. As to quaternary structure, interacts with CBFA2T3.

The protein localises to the nucleus. Functions as a transcriptional repressor. The sequence is that of Zinc finger protein 652 (Znf652) from Mus musculus (Mouse).